The sequence spans 963 residues: VPS35 endosomal protein-sorting factor-like (963 aa).

Positions 43-112 (SKTKKVSRKG…DKDENSFVGP (70 aa)) are disordered. A compositionally biased stretch (low complexity) spans 51 to 72 (KGSTSSTSSSSSSSVIDPLSSV). Ser265 is subject to Phosphoserine. A helical transmembrane segment spans residues 699–719 (AFVRACVAYCFITIPSLVGIF).

Belongs to the VPS35L family. As to quaternary structure, component of the heterotrimeric retriever complex formed by VPS26C, VPS29 and VPS35L. Interacts with VPS29. Interacts with COMMD1, CCDC93 and CCDC22; associates with the CCC (COMMD/CCDC22/CCDC93) complex which contains at least COMMD1 (and possibly other COMM domain-containing proteins), CCDC22 and CCDC93. Interacts with WASHC1, WASHC2A and WASHC2C. Interacts with SNX17 and SNX31.

It is found in the membrane. The protein resides in the endosome. Functionally, acts as a component of the retriever complex. The retriever complex is a heterotrimeric complex related to retromer cargo-selective complex (CSC) and essential for retromer-independent retrieval and recycling of numerous cargos such as integrin alpha-5/beta-1 (ITGA5:ITGB1). The recruitment of the retriever complex to the endosomal membrane involves CCC and WASH complexes. In the endosomes, drives the retrieval and recycling of NxxY-motif-containing cargo proteins by coupling to SNX17, a cargo essential for the homeostatic maintenance of numerous cell surface proteins associated with processes that include cell migration, cell adhesion, nutrient supply and cell signaling. Involved in copper-dependent ATP7A trafficking between the trans-Golgi network and vesicles in the cell periphery; the function is proposed to depend on its association with the CCC complex and cooperation with the WASH complex on early endosomes. Seems not to be required for CCC complex stability. The chain is VPS35 endosomal protein-sorting factor-like from Mus musculus (Mouse).